Reading from the N-terminus, the 539-residue chain is MAKMLKFSEEARRALERGVDAVADAVKITLGPKGRNVVIEKSWGSPTITNDGVSIAKEIELEDKFENLGAQLVKEVASKTNDVAGDGTTTATVLAQAMIKEGIKNVTAGANPILVKRGIEKAVAAGVEEIKKISKKLSSTNDIAHVASISANSEEIGKLIAEAMEKVGEDGVITVEDSKSIETYVEFTEGMQFDRGYVSPYFVTDPEKMEVVYNEPFILITDRKLSNIKPLIPILEKVAQTGKPLVIIAEDVEGEALTTLVLNKLKGTLNTVAVKAPGFGDRRKAMLQDIAILTGGIVASEEVGINLEDLTLNDLGRADVVRVKKDETIIVGGHGDQEEIKKRIAQIKAQIEQTTSEYEKETLQERMAKLAGGVAVIKVGAATETELKEKKHRIEDALSATRAAVEEGIVPGGGITLLRARKAVEKVVNELDGDEKIGAKIVYEALIAPINQIAKNAGYDGAIIIHKVLENDDPAYGFDALKGEYCNMFERGIIDPAKVTRSALQNAASIASMLLTTEALVVEKPEPKNNAPMPEMPEY.

ATP-binding positions include 29–32, 86–90, glycine 413, 479–481, and aspartate 495; these read TLGP, DGTTT, and DAL.

The protein belongs to the chaperonin (HSP60) family. Forms a cylinder of 14 subunits composed of two heptameric rings stacked back-to-back. Interacts with the co-chaperonin GroES.

The protein resides in the cytoplasm. The enzyme catalyses ATP + H2O + a folded polypeptide = ADP + phosphate + an unfolded polypeptide.. Functionally, together with its co-chaperonin GroES, plays an essential role in assisting protein folding. The GroEL-GroES system forms a nano-cage that allows encapsulation of the non-native substrate proteins and provides a physical environment optimized to promote and accelerate protein folding. This is Chaperonin GroEL from Thermosipho africanus (strain TCF52B).